We begin with the raw amino-acid sequence, 1778 residues long: Nuclear receptor corepressor 1 (1778 aa).

Positions 125 to 176 (DRLEEWSPEERSLFKSRQADHVKIFHGLTEFFVDKTASDLVLFYYMNKKTED) constitute an SANT domain. One can recognise a Myb-like domain in the interval 356–398 (WTDDEKTKLVTLINSSPTLDWVSISEGMNRRPNECKMQYDAMN). Residues 409–421 (VDEEDGNGQEEGG) show a composition bias toward acidic residues. Disordered regions lie at residues 409–671 (VDEE…TVST), 992–1024 (SLTP…AGRS), 1195–1218 (KLQQ…ATPQ), 1276–1339 (QHLQ…SRSV), 1414–1434 (PPKT…RTLS), and 1646–1718 (AAPT…PPLP). Composition is skewed to low complexity over residues 431-442 (SSAAARRSGLAR) and 450-469 (TPRA…VTRA). The span at 478–493 (DLGEEIDEMEIEDNDE) shows a compositional bias: acidic residues. Over residues 494 to 513 (DASRGSRGKDSKAPSDRDGS) the composition is skewed to basic and acidic residues. Acidic residues-rich tracts occupy residues 517 to 545 (MEGD…EEEE) and 599 to 616 (ESDD…DVDE). 2 stretches are compositionally biased toward low complexity: residues 626 to 639 (SSSS…SVGG) and 649 to 671 (LVQQ…TVST). Over residues 1276 to 1285 (QHLQQQQQHH) the composition is skewed to low complexity. Residues 1687–1696 (SSVNSNVSDV) are compositionally biased toward low complexity.

Belongs to the N-CoR nuclear receptor corepressors family. As to quaternary structure, interacts with gex-3. Interacts (via C-terminus) with nhr-60. In terms of tissue distribution, in larvae, expressed in pharyngeal neurons, ventral and dorsal nerve cords, tail neurons, egg-laying neurons and egg-laying muscles. Detected in the neurons of the pharyngeal nerve ring, head neurons, tail neurons and egg-laying muscles in adults. Detected in male-specific tail ganglia and rays in males.

Its subcellular location is the nucleus. Functionally, mediates transcriptional repression by certain nuclear receptors. Plays a role in development and neuronal function. May play a role in muscle-specific oxidative mitochondrial metabolism. The protein is Nuclear receptor corepressor 1 of Caenorhabditis elegans.